The sequence spans 119 residues: Large ribosomal subunit protein uL18 (119 aa).

It belongs to the universal ribosomal protein uL18 family. As to quaternary structure, part of the 50S ribosomal subunit; part of the 5S rRNA/L5/L18/L25 subcomplex. Contacts the 5S and 23S rRNAs.

In terms of biological role, this is one of the proteins that bind and probably mediate the attachment of the 5S RNA into the large ribosomal subunit, where it forms part of the central protuberance. The polypeptide is Large ribosomal subunit protein uL18 (Oceanobacillus iheyensis (strain DSM 14371 / CIP 107618 / JCM 11309 / KCTC 3954 / HTE831)).